A 164-amino-acid polypeptide reads, in one-letter code: uncharacterized protein (164 aa).

The HTH marR-type domain maps to 28–157; it reads EAEILYQLQG…LIDVLARMRN (130 aa). Residues 71–94 constitute a DNA-binding region (H-T-H motif); the sequence is QSDLQKKVNIDSAAVTRHLKQLES.

This is an uncharacterized protein from Bacillus subtilis (strain 168).